Consider the following 170-residue polypeptide: Phosphopantetheine adenylyltransferase (170 aa).

Thr-9 provides a ligand contact to substrate. ATP is bound by residues 9–10 (TF) and His-17. Lys-41, Leu-73, and Arg-87 together coordinate substrate. Residues 88 to 90 (GLR), Glu-98, and 123 to 129 (YQFISGT) contribute to the ATP site.

Belongs to the bacterial CoaD family. As to quaternary structure, homohexamer. Mg(2+) is required as a cofactor.

It localises to the cytoplasm. The catalysed reaction is (R)-4'-phosphopantetheine + ATP + H(+) = 3'-dephospho-CoA + diphosphate. The protein operates within cofactor biosynthesis; coenzyme A biosynthesis; CoA from (R)-pantothenate: step 4/5. Reversibly transfers an adenylyl group from ATP to 4'-phosphopantetheine, yielding dephospho-CoA (dPCoA) and pyrophosphate. In Bordetella petrii (strain ATCC BAA-461 / DSM 12804 / CCUG 43448), this protein is Phosphopantetheine adenylyltransferase.